We begin with the raw amino-acid sequence, 115 residues long: Cycloviolacin-O13 (115 aa).

The signal sequence occupies residues 1-22 (MDAKKMFVALVLIATFALPSLA). Positions 23–81 (TFEKDFITPETIQAILKKSAPLSNIMLEEDVINALLKSKTVISNPIIEEAFLKNSNGLN) are excised as a propeptide. Positions 82–111 (GIPCGESCVWIPCISAAIGCSCKSKVCYRN) form a cross-link, cyclopeptide (Gly-Asn). Intrachain disulfides connect Cys-85–Cys-101, Cys-89–Cys-103, and Cys-94–Cys-108. Positions 112 to 115 (SLDN) are excised as a propeptide.

In terms of processing, cycloviolacin-O13 is a cyclic peptide. Expressed in leaves, petals, petioles, roots and runners (at protein level).

Probably participates in a plant defense mechanism. Has hemolytic activity. The chain is Cycloviolacin-O13 from Viola odorata (Sweet violet).